A 219-amino-acid polypeptide reads, in one-letter code: Putative protease Do-like 6, chloroplastic (219 aa).

The transit peptide at 1–45 (MLFRSVHHIVARFSNSTSTPIHRFFYSPSLLRRRSSFNASLISRC) directs the protein to the chloroplast. Residues 61–216 (KIFSFSREPN…YSGQINKKIY (156 aa)) are serine protease. Active-site charge relay system residues include histidine 99, aspartate 130, and serine 208.

Belongs to the peptidase S1B family.

It localises to the plastid. Its subcellular location is the chloroplast. Functionally, putative serine protease. This chain is Putative protease Do-like 6, chloroplastic (DEGP6), found in Arabidopsis thaliana (Mouse-ear cress).